We begin with the raw amino-acid sequence, 142 residues long: MVLSAADKSNVKAAWGKVGGHAADYGAEALERMFLSFPTTKTYFPHFDLSHGSAQVKGHGAKVANALTKAVGHLDDLPGALSELSDLHAHKLRVDPVNFKLLSHSLLVTLASHLPNDFTPAVHASLDKFLASVSTVLTSKYR.

Residues 2–142 enclose the Globin domain; sequence VLSAADKSNV…VSTVLTSKYR (141 aa). His59 is an O2 binding site. Residue His88 participates in heme b binding.

This sequence belongs to the globin family. As to quaternary structure, heterotetramer of two alpha chains and two beta chains. In terms of tissue distribution, red blood cells.

Its function is as follows. Involved in oxygen transport from the lung to the various peripheral tissues. This is Hemoglobin subunit alpha-4 from Bubalus bubalis (Domestic water buffalo).